The following is a 557-amino-acid chain: Urocanate hydratase (557 aa).

The disordered stretch occupies residues 1 to 20; the sequence is MSNPRHNEREVRSPRGDELN. NAD(+) is bound by residues 52 to 53, Gln-130, 176 to 178, Glu-196, Arg-201, 242 to 243, 263 to 267, 273 to 274, and Tyr-322; these read GG, GMG, NA, QTSAH, and YL. The active site involves Cys-410. Residue Gly-492 participates in NAD(+) binding.

It belongs to the urocanase family. NAD(+) is required as a cofactor.

Its subcellular location is the cytoplasm. The catalysed reaction is 4-imidazolone-5-propanoate = trans-urocanate + H2O. It functions in the pathway amino-acid degradation; L-histidine degradation into L-glutamate; N-formimidoyl-L-glutamate from L-histidine: step 2/3. Catalyzes the conversion of urocanate to 4-imidazolone-5-propionate. The sequence is that of Urocanate hydratase from Brucella melitensis biotype 1 (strain ATCC 23456 / CCUG 17765 / NCTC 10094 / 16M).